Here is a 606-residue protein sequence, read N- to C-terminus: MACPF domain-containing protein At4g24290 (606 aa).

One can recognise an MACPF domain in the interval Met-1 to Leu-332.

The protein belongs to the complement C6/C7/C8/C9 (TC 1.C.39) family.

Negatively controls the salicylic acid (SA)-mediated pathway of programmed cell death in plant immunity. The protein is MACPF domain-containing protein At4g24290 of Arabidopsis thaliana (Mouse-ear cress).